The sequence spans 321 residues: Lambda-crystallin homolog (321 aa).

Ser-6 is modified (phosphoserine). NAD(+) contacts are provided by residues 19-20, Asp-39, Glu-100, and Lys-105; that span reads LI.

It belongs to the 3-hydroxyacyl-CoA dehydrogenase family. In terms of assembly, homodimer.

It is found in the cytoplasm. It catalyses the reaction L-gulonate + NAD(+) = 3-dehydro-L-gulonate + NADH + H(+). Its activity is regulated as follows. Inhibited by malonate. Its function is as follows. Has high L-gulonate 3-dehydrogenase activity. It also exhibits low dehydrogenase activity toward L-3-hydroxybutyrate (HBA) and L-threonate. The polypeptide is Lambda-crystallin homolog (CRYL1) (Bos taurus (Bovine)).